The primary structure comprises 756 residues: Protease KEX1 (756 aa).

The N-terminal stretch at 1 to 24 (MILSSQLMLALIAVSGYGKAMQVP) is a signal peptide. Asn121, Asn144, and Asn152 each carry an N-linked (GlcNAc...) asparagine glycan. Positions 130-440 (QWHLINPNYP…FGKLDAYNIV (311 aa)) constitute a Peptidase S8 domain. Catalysis depends on charge relay system residues Asp164 and His202. 2 disulfides stabilise this stretch: Cys218–Cys365 and Cys310–Cys340. The active-site Charge relay system is Ser373. N-linked (GlcNAc...) asparagine glycosylation is found at Asn392 and Asn538. In terms of domain architecture, P/Homo B spans 449-583 (VNPQGWLYLP…RLKMFGETID (135 aa)). Positions 599-632 (AEVKSTESKTTTPTAQTSSFTTTSGEETSGANKL) are disordered. The span at 606–628 (SKTTTPTAQTSSFTTTSGEETSG) shows a compositional bias: low complexity. The chain crosses the membrane as a helical span at residues 641-661 (LYLAIFVIGAIVIIIYYLFFL). The disordered stretch occupies residues 715–756 (EEELSPRESSSNNPFGNESLESFDNSPDHTSNLLGQNSIPNK). Positions 721-756 (RESSSNNPFGNESLESFDNSPDHTSNLLGQNSIPNK) are enriched in polar residues.

Belongs to the peptidase S8 family. Furin subfamily. Ca(2+) is required as a cofactor.

It localises to the membrane. Probably involved in the processing of the precursor of m1-toxin and alpha-factor. The chain is Protease KEX1 (KEX1) from Kluyveromyces lactis (strain ATCC 8585 / CBS 2359 / DSM 70799 / NBRC 1267 / NRRL Y-1140 / WM37) (Yeast).